Consider the following 740-residue polypeptide: ATP-dependent RNA helicase DDX1 (740 aa).

Residues 1–295 (MAAFSEMGVM…APKALIVEPS (295 aa)) are necessary for interaction with HNRNPK. The interval 1-448 (MAAFSEMGVM…DTVHHVVVPV (448 aa)) is interaction with dsRNA. The necessary for interaction with RELA stretch occupies residues 1–525 (MAAFSEMGVM…KIDCDNLEQY (525 aa)). Residues 2-428 (AAFSEMGVMP…SEKIMHFPTW (427 aa)) enclose the Helicase ATP-binding domain. 46-53 (AETGSGKT) contributes to the ATP binding site. Positions 70 to 247 (DQQEGKKGKT…LKFNFGEEEF (178 aa)) constitute a B30.2/SPRY domain. N6-acetyllysine occurs at positions 239 and 268. An N6-acetyllysine; alternate modification is found at Lys281. A Glycyl lysine isopeptide (Lys-Gly) (interchain with G-Cter in SUMO2); alternate cross-link involves residue Lys281. Positions 370–373 (DEAD) match the DEAD box motif. Ser481 carries the phosphoserine modification. A Helicase C-terminal domain is found at 493–681 (KGEYAVRAIK…QVEPDIKVPV (189 aa)). The tract at residues 525–740 (YFMQQGGGPD…YLPNQLFRTF (216 aa)) is necessary for interaction with HNRNPK.

It belongs to the DEAD box helicase family. DDX1 subfamily. Found in a multi-helicase-TICAM1 complex at least composed of DHX36, DDX1, DDX21 and TICAM1; this complex exists in resting cells with or without poly(I:C) RNA ligand stimulation. Interacts with DHX36. Interacts (via B30.2/SPRY domain) with DDX21 (via N-terminus); this interaction serves as bridges to TICAM1. Interacts with FAM98A (via N- and C-terminus). Interacts with MBNL1. Interacts with CSTF2. Interacts with HNRNPK. Interacts with ATM. Interacts with RELA (via C-terminus). Component of the tRNA-splicing ligase complex. Interacts with PHF5A (via C-terminus). Interacts with PQBP1. Interacts with ERCC6. Post-translationally, phosphorylated by ATM kinase; phosphorylation is increased in response to ionizing radiation (IR). In terms of tissue distribution, testis-specific. Expressed in the germ line stem cells, spermatogonia and spermatocytes of the testis. Also expressed in the seminoma and nonseminoma types of testicular germ cell tumors (TGCTs) (at protein level).

The protein resides in the nucleus. The protein localises to the cytoplasm. It is found in the cytosol. It localises to the cytoplasmic granule. Its subcellular location is the mitochondrion. The enzyme catalyses ATP + H2O = ADP + phosphate + H(+). Functionally, acts as an ATP-dependent RNA helicase, able to unwind both RNA-RNA and RNA-DNA duplexes. Possesses 5' single-stranded RNA overhang nuclease activity. Possesses ATPase activity on various RNA, but not DNA polynucleotides. May play a role in RNA clearance at DNA double-strand breaks (DSBs), thereby facilitating the template-guided repair of transcriptionally active regions of the genome. Together with RELA, acts as a coactivator to enhance NF-kappa-B-mediated transcriptional activation. Acts as a positive transcriptional regulator of cyclin CCND2 expression. Binds to the cyclin CCND2 promoter region. Associates with chromatin at the NF-kappa-B promoter region via association with RELA. Binds to poly(A) RNA. May be involved in 3'-end cleavage and polyadenylation of pre-mRNAs. Component of the tRNA-splicing ligase complex required to facilitate the enzymatic turnover of catalytic subunit RTCB: together with archease (ZBTB8OS), acts by facilitating the guanylylation of RTCB, a key intermediate step in tRNA ligation. Component of a multi-helicase-TICAM1 complex that acts as a cytoplasmic sensor of viral double-stranded RNA (dsRNA) and plays a role in the activation of a cascade of antiviral responses including the induction of pro-inflammatory cytokines via the adapter molecule TICAM1. Specifically binds (via helicase ATP-binding domain) on both short and long poly(I:C) dsRNA. In Mus musculus (Mouse), this protein is ATP-dependent RNA helicase DDX1 (Ddx1).